Reading from the N-terminus, the 407-residue chain is Arylacetamide deacetylase-like 4 (407 aa).

Topologically, residues 1–4 are cytoplasmic; the sequence is MAVP. The chain crosses the membrane as a helical; Signal-anchor for type II membrane protein span at residues 5–25; the sequence is WLVLLLALPIFFLGVFVWAVF. At 26–407 the chain is on the lumenal side; sequence EHFLTTDIPA…NAVVSYIKGI (382 aa). The Involved in the stabilization of the negatively charged intermediate by the formation of the oxyanion hole motif lies at 119-121; it reads HGG. Asn168 carries an N-linked (GlcNAc...) asparagine glycan. Ser193 is an active-site residue. Asn269 carries N-linked (GlcNAc...) asparagine glycosylation. Residues Asp347 and His377 contribute to the active site.

The protein belongs to the 'GDXG' lipolytic enzyme family.

It localises to the membrane. This Homo sapiens (Human) protein is Arylacetamide deacetylase-like 4 (AADACL4).